Reading from the N-terminus, the 341-residue chain is Holliday junction branch migration complex subunit RuvB (341 aa).

Positions 1-180 are large ATPase domain (RuvB-L); that stretch reads MAKSHTLNPE…FGIQLRLDYY (180 aa). Residues L19, R20, G61, K64, T65, T66, R170, Y180, and R217 each contribute to the ATP site. Mg(2+) is bound at residue T65. The small ATPAse domain (RuvB-S) stretch occupies residues 181–251; sequence NDEEMKEIVL…LCLKAFEKMG (71 aa). The head domain (RuvB-H) stretch occupies residues 254-341; it reads DLGLDGMDRQ…ENHGQDPTLF (88 aa). DNA-binding residues include R309 and R314.

Belongs to the RuvB family. In terms of assembly, homohexamer. Forms an RuvA(8)-RuvB(12)-Holliday junction (HJ) complex. HJ DNA is sandwiched between 2 RuvA tetramers; dsDNA enters through RuvA and exits via RuvB. An RuvB hexamer assembles on each DNA strand where it exits the tetramer. Each RuvB hexamer is contacted by two RuvA subunits (via domain III) on 2 adjacent RuvB subunits; this complex drives branch migration. In the full resolvosome a probable DNA-RuvA(4)-RuvB(12)-RuvC(2) complex forms which resolves the HJ.

It is found in the cytoplasm. The catalysed reaction is ATP + H2O = ADP + phosphate + H(+). In terms of biological role, the RuvA-RuvB-RuvC complex processes Holliday junction (HJ) DNA during genetic recombination and DNA repair, while the RuvA-RuvB complex plays an important role in the rescue of blocked DNA replication forks via replication fork reversal (RFR). RuvA specifically binds to HJ cruciform DNA, conferring on it an open structure. The RuvB hexamer acts as an ATP-dependent pump, pulling dsDNA into and through the RuvAB complex. RuvB forms 2 homohexamers on either side of HJ DNA bound by 1 or 2 RuvA tetramers; 4 subunits per hexamer contact DNA at a time. Coordinated motions by a converter formed by DNA-disengaged RuvB subunits stimulates ATP hydrolysis and nucleotide exchange. Immobilization of the converter enables RuvB to convert the ATP-contained energy into a lever motion, pulling 2 nucleotides of DNA out of the RuvA tetramer per ATP hydrolyzed, thus driving DNA branch migration. The RuvB motors rotate together with the DNA substrate, which together with the progressing nucleotide cycle form the mechanistic basis for DNA recombination by continuous HJ branch migration. Branch migration allows RuvC to scan DNA until it finds its consensus sequence, where it cleaves and resolves cruciform DNA. This chain is Holliday junction branch migration complex subunit RuvB, found in Leptospira borgpetersenii serovar Hardjo-bovis (strain L550).